The sequence spans 538 residues: Myeloid cell nuclear differentiation antigen-like protein (538 aa).

The Pyrin domain maps to 1 to 87 (MAEYKKIVLL…AKKLKTEKAK (87 aa)). A disordered region spans residues 120 to 306 (SYKSVPSSKK…PQPQNQNIPR (187 aa)). Composition is skewed to basic and acidic residues over residues 135–153 (AKTEGEKKNKLTQDQDHLP) and 245–262 (RREEETGVKKSKAAKEPD). A compositionally biased stretch (low complexity) spans 276–305 (SPILHSSSSASSNIPSATNQKPQPQNQNIP). In terms of domain architecture, HIN-200 spans 299-499 (PQNQNIPRGA…CGDHSFVKIK (201 aa)).

It belongs to the HIN-200 family. As to expression, highest expression observed in spleen and thymus with moderate levels in bone marrow, lung, skin and heart, low levels in muscle, liver and intestine and little or no expression in brain and pancreas.

It localises to the nucleus. Suppresses cell growth when expressed ectopically. This chain is Myeloid cell nuclear differentiation antigen-like protein, found in Mus musculus (Mouse).